Consider the following 443-residue polypeptide: Signal recognition particle 54 kDa protein (443 aa).

GTP contacts are provided by residues 107-114 (GIQGSGKT), 189-193 (DTAGR), and 247-250 (TKLD).

The protein belongs to the GTP-binding SRP family. SRP54 subfamily. In terms of assembly, part of the signal recognition particle protein translocation system, which is composed of SRP and FtsY. Archaeal SRP consists of a 7S RNA molecule of 300 nucleotides and two protein subunits: SRP54 and SRP19.

It is found in the cytoplasm. The enzyme catalyses GTP + H2O = GDP + phosphate + H(+). Involved in targeting and insertion of nascent membrane proteins into the cytoplasmic membrane. Binds to the hydrophobic signal sequence of the ribosome-nascent chain (RNC) as it emerges from the ribosomes. The SRP-RNC complex is then targeted to the cytoplasmic membrane where it interacts with the SRP receptor FtsY. The protein is Signal recognition particle 54 kDa protein of Pyrococcus furiosus (strain ATCC 43587 / DSM 3638 / JCM 8422 / Vc1).